The chain runs to 122 residues: MIQQESRLRVADNTGAKEILTIRVLGGSGRRYAGIGDVIVATVKDAIPGGNVKKGDVVKAVVVRTKKQRRRPDGSYIRFDENAAVILKNDGDPRGTRIFGPVGRELRDKKFMKIVSLAPEVL.

The protein belongs to the universal ribosomal protein uL14 family. Part of the 50S ribosomal subunit. Forms a cluster with proteins L3 and L19. In the 70S ribosome, L14 and L19 interact and together make contacts with the 16S rRNA in bridges B5 and B8.

Functionally, binds to 23S rRNA. Forms part of two intersubunit bridges in the 70S ribosome. This Kocuria rhizophila (strain ATCC 9341 / DSM 348 / NBRC 103217 / DC2201) protein is Large ribosomal subunit protein uL14.